Consider the following 182-residue polypeptide: Adenine phosphoribosyltransferase (182 aa).

The protein belongs to the purine/pyrimidine phosphoribosyltransferase family. Homodimer.

The protein localises to the cytoplasm. It carries out the reaction AMP + diphosphate = 5-phospho-alpha-D-ribose 1-diphosphate + adenine. The protein operates within purine metabolism; AMP biosynthesis via salvage pathway; AMP from adenine: step 1/1. Catalyzes a salvage reaction resulting in the formation of AMP, that is energically less costly than de novo synthesis. This Campylobacter jejuni subsp. doylei (strain ATCC BAA-1458 / RM4099 / 269.97) protein is Adenine phosphoribosyltransferase.